Consider the following 391-residue polypeptide: Eukaryotic initiation factor 4A-3 (391 aa).

Positions 18–46 (ASFAEMGIKDDLLRGVYQYGFEKPSAIQQ) match the Q motif motif. The region spanning 49 to 219 (VLPIISGRDV…SKFMTDPVRI (171 aa)) is the Helicase ATP-binding domain. Residue 62–69 (AQSGTGKT) participates in ATP binding. The DEAD box motif lies at 167 to 170 (DESD). The 162-residue stretch at 230–391 (GIKQFFVAVE…EMPMNVADLI (162 aa)) folds into the Helicase C-terminal domain.

The protein belongs to the DEAD box helicase family. eIF4A subfamily. As to quaternary structure, eIF4F is a multi-subunit complex, the composition of which varies with external and internal environmental conditions. It is composed of at least EIF4A, EIF4E and EIF4G.

It carries out the reaction ATP + H2O = ADP + phosphate + H(+). Functionally, ATP-dependent RNA helicase which is a subunit of the eIF4F complex involved in cap recognition and is required for mRNA binding to ribosome. In the current model of translation initiation, eIF4A unwinds RNA secondary structures in the 5'-UTR of mRNAs which is necessary to allow efficient binding of the small ribosomal subunit, and subsequent scanning for the initiator codon. This Nicotiana plumbaginifolia (Leadwort-leaved tobacco) protein is Eukaryotic initiation factor 4A-3.